Consider the following 545-residue polypeptide: MTKYIFITGGVVSSLGKGIAAASLAAILEARGLRVTLIKLDPYINVDPGTMSPFQHGEVFVTNDGAETDLDLGHYERFVKTTMTKRNNFTSGKIYENVIKKERRGDYLGGTVQVIPHITNEIKRCIKLGADAFDVAMVEIGGTVGDIESLPFLEAIRQMRIELGSQRAIFIHLTLVPYIATSGETKTKPTQHSVKELRSIGIQPDVLICRSEKPLSMADRAKIALFTNVEKEAVISLEDANSIYQIPMILHAQHLDEIVVKKLSLEAKQADLSEWQRVVDMQAVQTMTVKIAMVGKYTELNDAYKSINEALLHAGIHTETKVEIIYFDAEMIEKHGALLLESIDAILVPGGFGERGVEGKIKAIQYAREHKVPFLGICLGMQTAVIEFARNVVGLTGANSTEFNKETLYPVLGLISEWMDADGSKQIRDENTDLGGTMRLGGQYCHLAEGTLARKVYGKPQIIERHRHRYEVNNKYVDSLVKHGLIISGRSADNSLVEMIELADHPWFLACQFHPEFTSNPRDSHPLFKEFVLAARIHHQEKDKK.

The amidoligase domain stretch occupies residues 1–265; it reads MTKYIFITGG…DEIVVKKLSL (265 aa). Serine 13 is a binding site for CTP. Serine 13 is a UTP binding site. Residues 14 to 19 and aspartate 71 each bind ATP; that span reads SLGKGI. Mg(2+) contacts are provided by aspartate 71 and glutamate 139. Residues 146 to 148, 186 to 191, and lysine 222 each bind CTP; these read DIE and KTKPTQ. UTP-binding positions include 186-191 and lysine 222; that span reads KTKPTQ. The Glutamine amidotransferase type-1 domain occupies 290-541; it reads KIAMVGKYTE…VLAARIHHQE (252 aa). L-glutamine is bound at residue glycine 351. Catalysis depends on cysteine 378, which acts as the Nucleophile; for glutamine hydrolysis. L-glutamine contacts are provided by residues 379 to 382, glutamate 402, and arginine 469; that span reads LGMQ. Residues histidine 514 and glutamate 516 contribute to the active site.

Belongs to the CTP synthase family. In terms of assembly, homotetramer.

It catalyses the reaction UTP + L-glutamine + ATP + H2O = CTP + L-glutamate + ADP + phosphate + 2 H(+). The enzyme catalyses L-glutamine + H2O = L-glutamate + NH4(+). The catalysed reaction is UTP + NH4(+) + ATP = CTP + ADP + phosphate + 2 H(+). The protein operates within pyrimidine metabolism; CTP biosynthesis via de novo pathway; CTP from UDP: step 2/2. Allosterically activated by GTP, when glutamine is the substrate; GTP has no effect on the reaction when ammonia is the substrate. The allosteric effector GTP functions by stabilizing the protein conformation that binds the tetrahedral intermediate(s) formed during glutamine hydrolysis. Inhibited by the product CTP, via allosteric rather than competitive inhibition. In terms of biological role, catalyzes the ATP-dependent amination of UTP to CTP with either L-glutamine or ammonia as the source of nitrogen. Regulates intracellular CTP levels through interactions with the four ribonucleotide triphosphates. The chain is CTP synthase from Legionella pneumophila (strain Corby).